A 262-amino-acid polypeptide reads, in one-letter code: Putative hydro-lyase BLi00500/BL02808 (262 aa).

The protein belongs to the D-glutamate cyclase family.

This chain is Putative hydro-lyase BLi00500/BL02808, found in Bacillus licheniformis (strain ATCC 14580 / DSM 13 / JCM 2505 / CCUG 7422 / NBRC 12200 / NCIMB 9375 / NCTC 10341 / NRRL NRS-1264 / Gibson 46).